A 335-amino-acid chain; its full sequence is Leukocyte cell-derived chemotaxin-2 homolog (335 aa).

The first 20 residues, 1–20 (MHLRTLHFLILIGIFIGGQT), serve as a signal peptide directing secretion. Intrachain disulfides connect Cys28/Cys66 and Cys39/Cys46. A Zn(2+)-binding site is contributed by Asp63. An N-linked (GlcNAc...) asparagine glycan is attached at Asn317.

The protein belongs to the LECT2/MIM-1 family. As to quaternary structure, component of a multi-protein dma-1 receptor-ligand complex, which is activated upon binding of lect-2, mnr-1 and sax-7 ligands to promote the morphogenesis of dendrites which extend from the PVD neuronal body. Within the complex interacts with sax-7; the interaction is required for lect-2 dendritic localization and enhances the binding of the mnr-1 and sax-7 ligands to the dma-1 receptor-ligand complex. As to expression, expressed in body wall muscle cells, along the boundary of the lateral hypodermis, seam cells, processes of the nervous system including commissures, sensory dendrites in the head, and lateral nerve tracts, and motor neurons and some mechanosensory neurons such as ALM.

Its subcellular location is the secreted. It localises to the cell junction. The protein resides in the extracellular space. It is found in the extracellular matrix. The protein localises to the basement membrane. Its subcellular location is the cell projection. It localises to the dendrite. The protein resides in the perikaryon. It is found in the cell surface. Muscle-derived dendritic guidance cue, which is required for the formation of somatosensory dendritic arbors which extend from PVD and FLP sensory neurons during development. Ligand of a multi-protein dma-1 receptor-ligand complex, which is activated upon binding of lect-2, mnr-1 and sax-7 ligands to control the growth of dendrites that extend anteriorly from the PVD neuronal cell body. Enhances the binding of the mnr-1 and sax-7 ligands to the dma-1 receptor-ligand complex. Restricts the growth of secondary PVD dendritic branches and any irregularly positioned ectopic tertiary dendritic branches that originate from secondary branches, and promotes the formation of stable higher order dendritic branches. In particular, it is required for the formation of quaternary PVD dendritic branches and promotes their innervation of body wall muscles. Promotes self-avoidance of tertiary dendritic branches of PVD sensory neurons. Not required for the growth of dendrites that extend from AIY and PVQ interneurons, DVB GABergic neurons, PLM and ALM mechanosensory neurons, AFD sensory neurons and DD/VD and DA/DB motor neurons. This is Leukocyte cell-derived chemotaxin-2 homolog from Caenorhabditis elegans.